A 535-amino-acid polypeptide reads, in one-letter code: D-2-hydroxyglutarate dehydrogenase, mitochondrial (535 aa).

Residues 1–50 (MVLHLVPRWSASLFRASPRWKKTYSQRASAQLKWLGCPRSVYSPLACRAY) constitute a mitochondrion transit peptide. The region spanning 110–289 (VRGCSKVLLR…TAVSIVCPPR (180 aa)) is the FAD-binding PCMH-type domain. At lysine 115 the chain carries N6-succinyllysine. Arginine 400, threonine 404, and lysine 415 together coordinate (R)-2-hydroxyglutarate. Arginine 400 serves as a coordination point for (R)-lactate. (R)-malate is bound by residues arginine 400, threonine 404, and lysine 415. Positions 448 and 455 each coordinate Zn(2+). Asparagine 457 is a binding site for (R)-2-hydroxyglutarate. Zn(2+) is bound at residue glutamate 489. A (R)-2-hydroxyglutarate-binding site is contributed by histidine 490. Histidine 490 serves as a coordination point for (R)-lactate. Residue histidine 490 participates in (R)-malate binding.

The protein belongs to the FAD-binding oxidoreductase/transferase type 4 family. FAD is required as a cofactor.

Its subcellular location is the mitochondrion. It carries out the reaction (R)-2-hydroxyglutarate + A = 2-oxoglutarate + AH2. The catalysed reaction is (R)-malate + A = oxaloacetate + AH2. Its activity is regulated as follows. Activated by zinc, cobalt and manganese ions. Inhibited by EDTA. Catalyzes the oxidation of D-2-hydroxyglutarate (D-2-HG) to alpha-ketoglutarate. Also catalyzes the oxidation of other D-2-hydroxyacids, such as D-malate (D-MAL) and D-lactate (D-LAC). Exhibits high activities towards D-2-HG and D-MAL but a very weak activity towards D-LAC. The polypeptide is D-2-hydroxyglutarate dehydrogenase, mitochondrial (Rattus norvegicus (Rat)).